The primary structure comprises 137 residues: Nucleoside diphosphate kinase (137 aa).

6 residues coordinate ATP: lysine 9, phenylalanine 57, arginine 85, threonine 91, arginine 102, and asparagine 112. Catalysis depends on histidine 115, which acts as the Pros-phosphohistidine intermediate.

The protein belongs to the NDK family. As to quaternary structure, homotetramer. Requires Mg(2+) as cofactor.

It localises to the cytoplasm. It carries out the reaction a 2'-deoxyribonucleoside 5'-diphosphate + ATP = a 2'-deoxyribonucleoside 5'-triphosphate + ADP. The enzyme catalyses a ribonucleoside 5'-diphosphate + ATP = a ribonucleoside 5'-triphosphate + ADP. Major role in the synthesis of nucleoside triphosphates other than ATP. The ATP gamma phosphate is transferred to the NDP beta phosphate via a ping-pong mechanism, using a phosphorylated active-site intermediate. The sequence is that of Nucleoside diphosphate kinase from Thermus thermophilus (strain ATCC 27634 / DSM 579 / HB8).